Reading from the N-terminus, the 575-residue chain is Thiol:disulfide interchange protein DsbD (575 aa).

The signal sequence occupies residues 1–24 (MIKRTLMLFLLLCSPLLTPAAANA). 2 disulfide bridges follow: cysteine 126/cysteine 132 and cysteine 192/cysteine 314. 8 helical membrane-spanning segments follow: residues 180 to 200 (AILIGIGIAFTPCVLPMYPLI), 216 to 236 (IFWLALSYVQGMAVTYTLLGL), 253 to 273 (YVLIGLSVLFILLALSMFGLY), 297 to 317 (LFGVFAMGALAGLICSPCTTA), 336 to 356 (GLTLYLYALGMGLPLIAVTLF), 367 to 387 (WMQYVKEAFGFIILALPVFLL), 394 to 414 (AWGIRLWSLLAVSFLGWGFVL), and 425 to 445 (VIQLILLILMLIATRPLQDWF). The 132-residue stretch at 444–575 (WFWGTTVTQQ…FNEHLQHLPK (132 aa)) folds into the Thioredoxin domain. Cysteine 490 and cysteine 493 are joined by a disulfide.

This sequence belongs to the thioredoxin family. DsbD subfamily.

It localises to the cell inner membrane. The catalysed reaction is [protein]-dithiol + NAD(+) = [protein]-disulfide + NADH + H(+). It catalyses the reaction [protein]-dithiol + NADP(+) = [protein]-disulfide + NADPH + H(+). Functionally, required to facilitate the formation of correct disulfide bonds in some periplasmic proteins and for the assembly of the periplasmic c-type cytochromes. Acts by transferring electrons from cytoplasmic thioredoxin to the periplasm. This transfer involves a cascade of disulfide bond formation and reduction steps. In Photorhabdus laumondii subsp. laumondii (strain DSM 15139 / CIP 105565 / TT01) (Photorhabdus luminescens subsp. laumondii), this protein is Thiol:disulfide interchange protein DsbD.